The chain runs to 59 residues: Zinc finger protein HVO_2753 (59 aa).

4 short sequence motifs (c(P)XCG motif) span residues cysteine 12–glycine 16, cysteine 29–glycine 33, cysteine 39–arginine 43, and cysteine 51–glycine 55. Cysteine 29 and cysteine 32 together coordinate Zn(2+). The Zn(2+) site is built by cysteine 51 and cysteine 54.

In terms of assembly, monomer in solution.

In terms of biological role, zinc-binding protein that binds only one zinc ion. Is required for swarming and biofilm formation. The protein is Zinc finger protein HVO_2753 of Haloferax volcanii (strain ATCC 29605 / DSM 3757 / JCM 8879 / NBRC 14742 / NCIMB 2012 / VKM B-1768 / DS2) (Halobacterium volcanii).